The chain runs to 765 residues: Zinc finger and BTB domain-containing protein 49 (765 aa).

Positions 25-91 constitute a BTB domain; it reads CDCMLVVKGV…MYTSHLDLNQ (67 aa). 2 disordered regions span residues 165–203 and 275–294; these read QQNK…GSCT and NFLA…DATC. 7 consecutive C2H2-type zinc fingers follow at residues 395–417, 423–445, 451–473, 479–501, 507–529, 535–557, and 563–585; these read YACE…KRSH, FECN…LRRH, YICE…IIIH, HLCD…KKTH, FTCD…RIRH, YSCS…VRTH, and YTCE…KKMH.

Belongs to the krueppel C2H2-type zinc-finger protein family. As to quaternary structure, isoform 1 interacts with EP300 and KAT5/Tip60. The interaction with EP300 is direct and leads to synergistic induction of CDKN1A. On the CDKN1A promoter, forms a complex with ZBTB17/Miz-1; this interaction leads to additive CDKN1A transactivation. Isoform 3 also interacts with ZBTB17; this interaction may block ZBTB17 repressor activity. In terms of tissue distribution, highly expressed in normal epidermis and in other epithelial tissues, including in colon and lung. Tends to be down-regulated in colon, lung and skin cancer tissues.

The protein localises to the cytoplasm. Its subcellular location is the nucleus. In terms of biological role, transcription factor. Inhibits cell proliferation by activating either CDKN1A/p21 transcription or RB1 transcription. Functionally, binds CDKN1A promoter and activates its transcription; this activity is further potentiated in the presence of EP300 (synergistic) and ZBTB17/Miz-1 (additive). Activates RB1 transcription most probably by antagonizing ZBTB17 repression of RB1. Does not bind directly RB1 promoter. The protein is Zinc finger and BTB domain-containing protein 49 (ZBTB49) of Homo sapiens (Human).